A 122-amino-acid chain; its full sequence is Large ribosomal subunit protein uL18 (122 aa).

It belongs to the universal ribosomal protein uL18 family. As to quaternary structure, part of the 50S ribosomal subunit; part of the 5S rRNA/L5/L18/L25 subcomplex. Contacts the 5S and 23S rRNAs.

Functionally, this is one of the proteins that bind and probably mediate the attachment of the 5S RNA into the large ribosomal subunit, where it forms part of the central protuberance. The protein is Large ribosomal subunit protein uL18 of Desulfatibacillum aliphaticivorans.